The chain runs to 279 residues: NH(3)-dependent NAD(+) synthetase (279 aa).

Position 40-47 (Gly40–Ser47) interacts with ATP. Position 46 (Asp46) interacts with Mg(2+). Deamido-NAD(+) is bound at residue Arg122. Thr142 contributes to the ATP binding site. Glu147 provides a ligand contact to Mg(2+). The deamido-NAD(+) site is built by Lys155 and Asp162. Residues Lys171 and Ser193 each contribute to the ATP site. A deamido-NAD(+)-binding site is contributed by His253 to Lys254.

The protein belongs to the NAD synthetase family. As to quaternary structure, homodimer.

The catalysed reaction is deamido-NAD(+) + NH4(+) + ATP = AMP + diphosphate + NAD(+) + H(+). The protein operates within cofactor biosynthesis; NAD(+) biosynthesis; NAD(+) from deamido-NAD(+) (ammonia route): step 1/1. In terms of biological role, catalyzes the ATP-dependent amidation of deamido-NAD to form NAD. Uses ammonia as a nitrogen source. The polypeptide is NH(3)-dependent NAD(+) synthetase (Sulfurisphaera tokodaii (strain DSM 16993 / JCM 10545 / NBRC 100140 / 7) (Sulfolobus tokodaii)).